We begin with the raw amino-acid sequence, 143 residues long: Small ribosomal subunit protein uS12B (143 aa).

Residue Pro-62 is modified to 3,4-dihydroxyproline.

This sequence belongs to the universal ribosomal protein uS12 family. Component of the small ribosomal subunit (SSU). Mature yeast ribosomes consist of a small (40S) and a large (60S) subunit. The 40S small subunit contains 1 molecule of ribosomal RNA (18S rRNA) and at least 33 different proteins. The large 60S subunit contains 3 rRNA molecules (25S, 5.8S and 5S rRNA) and at least 46 different proteins. In terms of processing, hydroxylation at Pro-62 affects translation termination efficiency.

The protein resides in the cytoplasm. Its subcellular location is the nucleus. It localises to the nucleolus. In terms of biological role, component of the ribosome, a large ribonucleoprotein complex responsible for the synthesis of proteins in the cell. The small ribosomal subunit (SSU) binds messenger RNAs (mRNAs) and translates the encoded message by selecting cognate aminoacyl-transfer RNA (tRNA) molecules. The large subunit (LSU) contains the ribosomal catalytic site termed the peptidyl transferase center (PTC), which catalyzes the formation of peptide bonds, thereby polymerizing the amino acids delivered by tRNAs into a polypeptide chain. The nascent polypeptides leave the ribosome through a tunnel in the LSU and interact with protein factors that function in enzymatic processing, targeting, and the membrane insertion of nascent chains at the exit of the ribosomal tunnel. This Schizosaccharomyces pombe (strain 972 / ATCC 24843) (Fission yeast) protein is Small ribosomal subunit protein uS12B (rps2302).